Here is a 192-residue protein sequence, read N- to C-terminus: UPF0149 protein KPN78578_32810 (192 aa).

It belongs to the UPF0149 family.

This chain is UPF0149 protein KPN78578_32810, found in Klebsiella pneumoniae subsp. pneumoniae (strain ATCC 700721 / MGH 78578).